Reading from the N-terminus, the 494-residue chain is Glycogen synthase (494 aa).

An ADP-alpha-D-glucose-binding site is contributed by lysine 15.

It belongs to the glycosyltransferase 1 family. Bacterial/plant glycogen synthase subfamily.

It carries out the reaction [(1-&gt;4)-alpha-D-glucosyl](n) + ADP-alpha-D-glucose = [(1-&gt;4)-alpha-D-glucosyl](n+1) + ADP + H(+). It functions in the pathway glycan biosynthesis; glycogen biosynthesis. Synthesizes alpha-1,4-glucan chains using ADP-glucose. This is Glycogen synthase from Albidiferax ferrireducens (strain ATCC BAA-621 / DSM 15236 / T118) (Rhodoferax ferrireducens).